The sequence spans 296 residues: MTNKLTSFLADRKKTIENQLSVYTEKLDMPDSLKKSMLYSLQAGGKRLRPLIVLAVLNAYGKSEKDGIPVGCAVEMIHTYSLIHDDLPCMDDDDLRRGKPTNHKVFGEATAVLAGDGLLTESFKLITSHVSDEVSAEKRLRLVNELISAAGTEGMVGGQVADMEAENRQVTLEELESIHERKTAKLLGFCVIAGAILADAPEEDIETLRTFSSHIGIGFQIRDDILDLEGSEEKIGKRVGSDTTNDKSTYPSLLSLEGAKHKLDVHIKEAKRLIGGLSLQKDLLYELCDLIAARDH.

Residues K46, R49, and H78 each coordinate isopentenyl diphosphate. Positions 85 and 91 each coordinate Mg(2+). Residue R96 participates in (2E)-geranyl diphosphate binding. Isopentenyl diphosphate is bound at residue R97. Residues K182, T183, Q220, and K237 each contribute to the (2E)-geranyl diphosphate site.

This sequence belongs to the FPP/GGPP synthase family. Mg(2+) serves as cofactor.

Its subcellular location is the cytoplasm. It carries out the reaction isopentenyl diphosphate + (2E)-geranyl diphosphate = (2E,6E)-farnesyl diphosphate + diphosphate. The chain is Farnesyl diphosphate synthase (ispA) from Bacillus subtilis (strain 168).